Consider the following 1154-residue polypeptide: Nitric oxide synthase, inducible (1154 aa).

Residues 22-58 (KDINNNVEKPPGATPSPSTQDDLKNHKHHNDSPQPLT) are disordered. A DINNN-motif; mediates interaction with SPSB1, SPSB2 and SPSB4 motif is present at residues 23–27 (DINNN). Residues Cys-107 and Cys-112 each coordinate Zn(2+). Cys-197 provides a ligand contact to heme b. The L-arginine site is built by Gln-260, Trp-369, Tyr-370, and Glu-374. Positions 378, 459, 460, and 473 each coordinate (6R)-L-erythro-5,6,7,8-tetrahydrobiopterin. Residue Tyr-488 participates in heme b binding. The tract at residues 512-532 (LKVLVKAVLFASMLMRKTMAS) is calmodulin-binding. Residues 536–674 (VTILFATETG…AFRCWAVQTF (139 aa)) form the Flavodoxin-like domain. The FMN site is built by Thr-542, Glu-543, Thr-544, Lys-546, and Ser-547. At Tyr-572 the chain carries Phosphotyrosine. Positions 588, 589, 625, 632, and 658 each coordinate FMN. The region spanning 727–967 (KNVFTLRLKS…VRSAGNFKLP (241 aa)) is the FAD-binding FR-type domain. Arg-747 lines the NADP(+) pocket. FAD is bound by residues His-769, Arg-903, Tyr-905, Ser-906, Thr-921, Ala-923, Tyr-927, Val-940, Cys-941, and Ser-942. NADP(+)-binding residues include Thr-981, Arg-1014, Ser-1043, Arg-1044, Lys-1050, Tyr-1052, Gln-1054, and Asp-1087.

It belongs to the NOS family. As to quaternary structure, homodimer. Interacts with NHERF1. Interacts with GAPDH; induced by oxidatively-modified low-densitity lipoprotein (LDL(ox)). Interacts with S100A8 and S100A9 to form the iNOS-S100A8/9 transnitrosylase complex. Interacts with SPSB1, SPSB2 and SPSB4. Interacts with ELOC and CUL5 in the presence of SPSB1 or SPSB2 or SPSB4. Forms a complex with ASL, ASS1 and HSP90AA1; the complex regulates cell-autonomous L-arginine synthesis and citrulline recycling while channeling extracellular L-arginine to nitric oxide synthesis pathway. Heme b serves as cofactor. The cofactor is FAD. Requires FMN as cofactor. (6R)-L-erythro-5,6,7,8-tetrahydrobiopterin is required as a cofactor. Post-translationally, polyubiquitinated; mediated by SPSB1, SPSB2 and SPSB4, leading to proteasomal degradation.

It localises to the cytoplasm. Its subcellular location is the cytosol. The enzyme catalyses 2 L-arginine + 3 NADPH + 4 O2 + H(+) = 2 L-citrulline + 2 nitric oxide + 3 NADP(+) + 4 H2O. Regulated by calcium/calmodulin. Its function is as follows. Produces nitric oxide (NO) which is a messenger molecule with diverse functions throughout the body. In macrophages, NO mediates tumoricidal and bactericidal actions. Also has nitrosylase activity and mediates cysteine S-nitrosylation of cytoplasmic target proteins such PTGS2/COX2. As component of the iNOS-S100A8/9 transnitrosylase complex involved in the selective inflammatory stimulus-dependent S-nitrosylation of GAPDH implicated in regulation of the GAIT complex activity and probably multiple targets including ANXA5, EZR, MSN and VIM. Involved in inflammation, enhances the synthesis of pro-inflammatory mediators such as IL6 and IL8. The chain is Nitric oxide synthase, inducible (NOS2) from Canis lupus familiaris (Dog).